Reading from the N-terminus, the 1231-residue chain is Complement factor H (1231 aa).

An N-terminal signal peptide occupies residues 1–18 (MRLLAKIICLMLWAICVA). 20 consecutive Sushi domains span residues 19–82 (EDCN…KCQK), 83–143 (RPCG…ICEV), 144–207 (VKCL…KCVE), 208–264 (ISCK…SCEE), 265–322 (KSCD…RCTL), 324–386 (PCDY…VPCL), 387–444 (RKCY…RCIR), 446–507 (KTCS…TCIK), 515–566 (MNAR…ICYE), 567–625 (RECE…ICKE), 628–686 (QSCG…VCIV), 689–746 (STCG…QCVA), 751–805 (KKCK…NCSM), 809–866 (QLCP…LCVE), 868–928 (IPCS…QCEG), 929–986 (LPCK…SCIK), 987–1045 (TDCL…TCRD), 1046–1104 (TSCV…QCKD), 1107–1165 (GKCG…KCLH), and 1170–1230 (SREI…TCAK). Intrachain disulfides connect cysteine 21-cysteine 66, cysteine 52-cysteine 80, cysteine 85-cysteine 129, cysteine 114-cysteine 141, cysteine 146-cysteine 192, cysteine 178-cysteine 205, cysteine 210-cysteine 251, cysteine 237-cysteine 262, cysteine 267-cysteine 309, cysteine 294-cysteine 320, cysteine 325-cysteine 374, cysteine 357-cysteine 385, cysteine 389-cysteine 431, cysteine 416-cysteine 442, cysteine 448-cysteine 494, cysteine 477-cysteine 505, cysteine 509-cysteine 553, cysteine 536-cysteine 564, cysteine 569-cysteine 611, cysteine 597-cysteine 623, cysteine 630-cysteine 673, cysteine 659-cysteine 684, cysteine 691-cysteine 733, cysteine 719-cysteine 744, cysteine 753-cysteine 792, cysteine 781-cysteine 803, cysteine 811-cysteine 853, cysteine 839-cysteine 864, cysteine 870-cysteine 915, cysteine 901-cysteine 926, cysteine 931-cysteine 973, cysteine 959-cysteine 984, cysteine 989-cysteine 1032, cysteine 1018-cysteine 1043, cysteine 1048-cysteine 1091, cysteine 1077-cysteine 1102, cysteine 1109-cysteine 1152, cysteine 1138-cysteine 1163, cysteine 1167-cysteine 1218, and cysteine 1201-cysteine 1228. Asparagine 217 carries an N-linked (GlcNAc...) (complex) asparagine glycan. A glycan (N-linked (GlcNAc...) asparagine) is linked at asparagine 529. Asparagine 718 carries an N-linked (GlcNAc...) asparagine glycan. Residues asparagine 802 and asparagine 822 are each glycosylated (N-linked (GlcNAc...) asparagine). Asparagine 882 and asparagine 911 each carry an N-linked (GlcNAc...) (complex) asparagine glycan. N-linked (GlcNAc...) (complex) asparagine glycosylation occurs at asparagine 1029. A glycan (N-linked (GlcNAc...) asparagine) is linked at asparagine 1095.

Homodimer. Also forms homooligomers. Interacts with complement protein C3b; this interaction inhibits complement activation. Interacts with complement protein C3d. Interacts with CR3/ITGAM; this interaction mediates adhesion of neutrophils to pathogens leading to pathogen clearance. Interacts with complement factor I. As to quaternary structure, (Microbial infection) Interacts with West nile virus non-structural protein 1 (NS1); this interaction leads to the degradation of C3. In terms of assembly, (Microbial infection) Interacts with C.albicans GPD2; the interaction is direct and leads to the degradation of C3 which enables the pathogen to evade the host innate immune system. (Microbial infection) Interacts with Neisseria meningitidis protein fHbp. As to quaternary structure, (Microbial infection) Interacts with Borrelia burgdorferi outer surface protein E/OspE; this interaction recruits complement regulator factor H onto the bacterial surface to evade complement-mediated cell lysis. In terms of assembly, (Microbial infection) Interacts with Streptococcus pneumoniae protein virulence factor choline-binding protein A/CbpAN; this interaction enables Streptococcus pneumoniae to evade surveillance by human complement system. (Microbial infection) Interacts with Staphylococcus aureus surface protein serine-aspartate repeat protein E/SdrE; this interaction sequesters CFH on the surface of S.aureus for complement evasion. As to quaternary structure, (Microbial infection) Interacts with Staphylococcus aureus protein Sbi; this interaction inhibits the complement activation of the alternative pathway. In terms of assembly, (Microbial infection) Interacts (via sushi 4-6 domains) with P.falciparum surface protein PF92; the interaction recruits CFH onto the merozoite surface preventing complement-mediated cell lysis. The interaction does not affect CFH activity. Interacts (via sushi 6-7 domains) with P.falciparum (strain NF54) GAP50; the interaction occurs in the vector mosquito midgut at the surface of the activated parasite gametocytes; the interaction protects the parasite from alternative complement pathway-mediated elimination. (Microbial infection) Interacts (via sushi 4-6 domains) with P.falciparum surface protein PF92; the interaction recruits FHL-1 isoform onto the merozoite surface preventing complement-mediated cell lysis. The interaction does not affect FHL-1 isoform activity. Interacts (via sushi 6-7 domains) with P.falciparum (strain NF54) GAP50; the interaction occurs in the vector mosquito midgut at the surface of the activated parasite gametocytes; the interaction protects the parasite from alternative complement pathway-mediated elimination. In terms of processing, sulfated on tyrosine residues. According to a report, Asn-217 is not glycosylated. Another study observed glycosylation at this position. As to expression, expressed in the retinal pigment epithelium (at protein level). CFH is one of the most abundant complement components in blood where the liver is the major source of CFH protein in vivo. in addition, CFH is secreted by additional cell types including monocytes, fibroblasts, or endothelial cells.

The protein localises to the secreted. Functionally, glycoprotein that plays an essential role in maintaining a well-balanced immune response by modulating complement activation. Acts as a soluble inhibitor of complement, where its binding to self markers such as glycan structures prevents complement activation and amplification on cell surfaces. Accelerates the decay of the complement alternative pathway (AP) C3 convertase C3bBb, thus preventing local formation of more C3b, the central player of the complement amplification loop. As a cofactor of the serine protease factor I, CFH also regulates proteolytic degradation of already-deposited C3b. In addition, mediates several cellular responses through interaction with specific receptors. For example, interacts with CR3/ITGAM receptor and thereby mediates the adhesion of human neutrophils to different pathogens. In turn, these pathogens are phagocytosed and destroyed. (Microbial infection) In the mosquito midgut, binds to the surface of parasite P.falciparum gametocytes and protects the parasite from alternative complement pathway-mediated elimination. In Homo sapiens (Human), this protein is Complement factor H (CFH).